An 89-amino-acid polypeptide reads, in one-letter code: Endoribonuclease VapD 1 (89 aa).

This sequence belongs to the VapD ribonuclease family. Homodimer.

Functionally, cleaves ssRNA, mostly between U:A. This chain is Endoribonuclease VapD 1, found in Riemerella anatipestifer (Moraxella anatipestifer).